The following is a 112-amino-acid chain: Cytochrome c (112 aa).

Residues Cys-23, Cys-26, His-27, and Met-89 each coordinate heme c.

It belongs to the cytochrome c family. Post-translationally, binds 1 heme c group covalently per subunit.

Its subcellular location is the mitochondrion intermembrane space. Electron carrier protein. The oxidized form of the cytochrome c heme group can accept an electron from the heme group of the cytochrome c1 subunit of cytochrome reductase. Cytochrome c then transfers this electron to the cytochrome oxidase complex, the final protein carrier in the mitochondrial electron-transport chain. The protein is Cytochrome c (CYC1) of Chlamydomonas reinhardtii (Chlamydomonas smithii).